Here is a 232-residue protein sequence, read N- to C-terminus: Orotate phosphoribosyltransferase (232 aa).

Residues R107, K108, K111, and 133-141 (EDLTTDGGS) each bind 5-phospho-alpha-D-ribose 1-diphosphate. T137 provides a ligand contact to orotate.

This sequence belongs to the purine/pyrimidine phosphoribosyltransferase family. PyrE subfamily. Homodimer. Mg(2+) serves as cofactor.

The enzyme catalyses orotidine 5'-phosphate + diphosphate = orotate + 5-phospho-alpha-D-ribose 1-diphosphate. The protein operates within pyrimidine metabolism; UMP biosynthesis via de novo pathway; UMP from orotate: step 1/2. In terms of biological role, catalyzes the transfer of a ribosyl phosphate group from 5-phosphoribose 1-diphosphate to orotate, leading to the formation of orotidine monophosphate (OMP). In Cereibacter sphaeroides (strain ATCC 17025 / ATH 2.4.3) (Rhodobacter sphaeroides), this protein is Orotate phosphoribosyltransferase.